The chain runs to 716 residues: ATP-dependent DNA helicase DinG (716 aa).

The 278-residue stretch at 17 to 294 (ALQEQIPDFI…TCMEQFRPKT (278 aa)) folds into the Helicase ATP-binding domain. Position 54 to 61 (54 to 61 (APTGVGKT)) interacts with ATP. Cys120 contacts [4Fe-4S] cluster. The DEAH box motif lies at 131 to 134 (EPTQ). Cys194, Cys199, and Cys205 together coordinate [4Fe-4S] cluster. Residues 248 to 251 (DEGH) carry the DEAH box motif. Residues 487-698 (ALDSPFNHCE…VFPIEQPEVP (212 aa)) enclose the Helicase C-terminal domain.

Belongs to the helicase family. DinG subfamily. Type 1 sub-subfamily. [4Fe-4S] cluster serves as cofactor.

The enzyme catalyses Couples ATP hydrolysis with the unwinding of duplex DNA at the replication fork by translocating in the 5'-3' direction. This creates two antiparallel DNA single strands (ssDNA). The leading ssDNA polymer is the template for DNA polymerase III holoenzyme which synthesizes a continuous strand.. The catalysed reaction is ATP + H2O = ADP + phosphate + H(+). Its function is as follows. DNA-dependent ATPase and 5'-3' DNA helicase. Unwinds D-loops, R-loops, forked DNA and G-quadruplex DNA. In Shigella flexneri, this protein is ATP-dependent DNA helicase DinG.